The primary structure comprises 456 residues: Putative F-box/LRR-repeat protein At3g18150 (456 aa).

Residues 30–78 (VDSISSLPDVILQHILSFIPTKLAITTSLLSKRWRHVWCDTPSLSFNDY) form the F-box domain. LRR repeat units lie at residues 177–202 (TCLL…TLDH), 203–213 (CGGLRVLDLSK), 228–253 (VPEL…KLPC), 278–303 (KADF…TLGG), 333–358 (IFQY…TLLT), and 396–422 (CLDV…DKMV).

The polypeptide is Putative F-box/LRR-repeat protein At3g18150 (Arabidopsis thaliana (Mouse-ear cress)).